Here is a 1169-residue protein sequence, read N- to C-terminus: Pesticidal crystal protein Cry1Fb (1169 aa).

The protein belongs to the delta endotoxin family.

Functionally, promotes colloidosmotic lysis by binding to the midgut epithelial cells of insects. This chain is Pesticidal crystal protein Cry1Fb (cry1Fb), found in Bacillus thuringiensis subsp. morrisoni.